The following is a 625-amino-acid chain: Probable potassium transport system protein Kup (625 aa).

Helical transmembrane passes span 13–33, 53–73, 103–123, 141–161, 172–192, 206–226, 250–270, 282–302, 340–360, 369–389, 400–420, and 422–442; these read TALA…LYAL, ILSI…VAIV, IYMI…GIIT, VFDP…FLVQ, FGPI…HSVI, AIQF…AVVL, WFFV…ALLL, LLVP…ATVI, IYVP…ILIF, AYGL…AVFI, VLIL…ATSL, and ILSG…ILMT.

It belongs to the HAK/KUP transporter (TC 2.A.72) family.

It is found in the cell inner membrane. The enzyme catalyses K(+)(in) + H(+)(in) = K(+)(out) + H(+)(out). Transport of potassium into the cell. Likely operates as a K(+):H(+) symporter. In Acinetobacter baumannii (strain SDF), this protein is Probable potassium transport system protein Kup.